Here is a 232-residue protein sequence, read N- to C-terminus: U2 small nuclear ribonucleoprotein B'' (232 aa).

In terms of domain architecture, RRM 1 spans 10-89 (QTVYLRNLNE…KRMRVQYAKT (80 aa)). Residues 92 to 159 (DCLATEDGST…QEPPAPPNNI (68 aa)) form a disordered region. Residues 108–123 (KKQEEKAAEKKRRAEE) are compositionally biased toward basic and acidic residues. A compositionally biased stretch (polar residues) spans 127-151 (SGPNAAAQSNGTGYQASRLGKTSQE). An RRM 2 domain is found at 158–232 (NILFIQNLPA…NPMAISYAKK (75 aa)).

It belongs to the RRM U1 A/B'' family. As to quaternary structure, component of the spliceosome where it is associated with snRNP U2.

It localises to the nucleus. Its subcellular location is the cajal body. The protein resides in the nucleoplasm. It is found in the cytoplasm. Its function is as follows. Involved in nuclear pre-mRNA splicing. The polypeptide is U2 small nuclear ribonucleoprotein B'' (Oryza sativa subsp. indica (Rice)).